The following is a 245-amino-acid chain: Cytochrome c oxidase subunit 2 (245 aa).

Over 1 to 36 (MYMLNNMLNDVPTPWGMFFQDSATPNMEGMMELHNN) the chain is Mitochondrial intermembrane. A helical membrane pass occupies residues 37 to 56 (VMFYLCMMLGFVSYMLYNML). At 57–76 (TTYNHSVLPYKYLYHGQFIE) the chain is on the mitochondrial matrix side. Residues 77-101 (IVWTTFPAMILLIIAFPSFILLYIC) traverse the membrane as a helical segment. Topologically, residues 102-245 (DEVIAPAMTI…GEFLAWIDEQ (144 aa)) are mitochondrial intermembrane. Cu cation is bound by residues His180, Cys215, Glu217, Cys219, His223, and Met226. A Mg(2+)-binding site is contributed by Glu217.

This sequence belongs to the cytochrome c oxidase subunit 2 family. As to quaternary structure, component of the cytochrome c oxidase (complex IV, CIV), a multisubunit enzyme composed of a catalytic core of 3 subunits and several supernumerary subunits. The complex exists as a monomer or a dimer and forms supercomplexes (SCs) in the inner mitochondrial membrane with ubiquinol-cytochrome c oxidoreductase (cytochrome b-c1 complex, complex III, CIII). The cofactor is Cu cation.

It localises to the mitochondrion inner membrane. It catalyses the reaction 4 Fe(II)-[cytochrome c] + O2 + 8 H(+)(in) = 4 Fe(III)-[cytochrome c] + 2 H2O + 4 H(+)(out). Functionally, component of the cytochrome c oxidase, the last enzyme in the mitochondrial electron transport chain which drives oxidative phosphorylation. The respiratory chain contains 3 multisubunit complexes succinate dehydrogenase (complex II, CII), ubiquinol-cytochrome c oxidoreductase (cytochrome b-c1 complex, complex III, CIII) and cytochrome c oxidase (complex IV, CIV), that cooperate to transfer electrons derived from NADH and succinate to molecular oxygen, creating an electrochemical gradient over the inner membrane that drives transmembrane transport and the ATP synthase. Cytochrome c oxidase is the component of the respiratory chain that catalyzes the reduction of oxygen to water. Electrons originating from reduced cytochrome c in the intermembrane space (IMS) are transferred via the dinuclear copper A center (CU(A)) of subunit 2 and heme A of subunit 1 to the active site in subunit 1, a binuclear center (BNC) formed by heme A3 and copper B (CU(B)). The BNC reduces molecular oxygen to 2 water molecules using 4 electrons from cytochrome c in the IMS and 4 protons from the mitochondrial matrix. The protein is Cytochrome c oxidase subunit 2 (COX2) of Dekkera bruxellensis (Brettanomyces custersii).